We begin with the raw amino-acid sequence, 131 residues long: Con-Ins Q1 (131 aa).

The signal sequence occupies residues 1–24; that stretch reads MTTSSYFLLVALGLLLYLCQSSFG. Intrachain disulfides connect cysteine 29–cysteine 107, cysteine 41–cysteine 110, cysteine 53–cysteine 123, and cysteine 109–cysteine 114. Residues 59 to 92 constitute a propeptide, c peptide; sequence LQGGTDDARKKRGRASLLRKRRGFLSMLKARAKR. Glutamate 118 is modified (4-carboxyglutamate; partial). At serine 130 the chain carries Serine amide.

Belongs to the insulin family. In terms of assembly, heterodimer of A and B chains; disulfide-linked. Expressed by the venom gland.

It localises to the secreted. Its function is as follows. This venom insulin facilitates prey capture by rapidly inducing hypoglycemic shock. Intraperitoneal injection of this peptide into zebrafish lowers blood glucose with the same potency than human insulin. In vivo, when applied to water, this peptide reduces overall locomotor activity of zebrafish larvae, observed as a significant decrease in the percentage of time spent swimming and movement frequency. In Conus quercinus (Oak cone), this protein is Con-Ins Q1.